Here is a 660-residue protein sequence, read N- to C-terminus: V-type ATP synthase subunit I (660 aa).

Helical transmembrane passes span 312–332 (FFAF…GLLF), 362–382 (ILGL…GMSF), 453–473 (FIDN…LSLG), 485–505 (IGWI…LGTV), 520–540 (GQIG…LAMI), 560–580 (VLSY…GATF), and 593–613 (SIVI…GGVI).

The protein belongs to the V-ATPase 116 kDa subunit family.

The protein localises to the cell membrane. Produces ATP from ADP in the presence of a proton gradient across the membrane. The polypeptide is V-type ATP synthase subunit I (atpI) (Chlamydia pneumoniae (Chlamydophila pneumoniae)).